Reading from the N-terminus, the 588-residue chain is 2-(3-amino-3-carboxypropyl)histidine synthase subunit 2 (588 aa).

[4Fe-4S] cluster contacts are provided by C149, C170, and C402. Disordered regions lie at residues 454 to 485 (DERN…VTGQ) and 546 to 588 (GLGS…TKFQ). Over residues 466 to 477 (DNNEEDSDDEAP) the composition is skewed to acidic residues. The span at 579-588 (YDYDRETKFQ) shows a compositional bias: basic and acidic residues.

The protein belongs to the DPH1/DPH2 family. DPH2 subfamily. As to quaternary structure, component of the 2-(3-amino-3-carboxypropyl)histidine synthase complex composed of DPH1, DPH2, DPH3 and a NADH-dependent reductase, predominantly CBR1. [4Fe-4S] cluster is required as a cofactor.

It localises to the cytoplasm. It participates in protein modification; peptidyl-diphthamide biosynthesis. Its function is as follows. Required for the first step of diphthamide biosynthesis, a post-translational modification of histidine which occurs in elongation factor 2. DPH1 and DPH2 transfer a 3-amino-3-carboxypropyl (ACP) group from S-adenosyl-L-methionine (SAM) to a histidine residue, the reaction is assisted by a reduction system comprising DPH3 and a NADH-dependent reductase, predominantly CBR1. Facilitates the reduction of the catalytic iron-sulfur cluster found in the DPH1 subunit. This chain is 2-(3-amino-3-carboxypropyl)histidine synthase subunit 2 (DPH2), found in Debaryomyces hansenii (strain ATCC 36239 / CBS 767 / BCRC 21394 / JCM 1990 / NBRC 0083 / IGC 2968) (Yeast).